A 787-amino-acid chain; its full sequence is MKVAVLDLGSLFAKIFKLSTASPAVSSHPGGAAATGSVDSGASTSLREAETLTLLPSLPPDTAASREPFTPVHTPLPASHPRSSAAAQRVEATGCSGSLPSSSGASIAPPLTPYSGSAGSVASVTLPSPGVDWATLPSVTIPLGSNSVTASSPRNPRQLRAPGEREPSVWMAPGPVPKTLFFTLPDIGEEWTSDSDSQDDPEGRGLSEGLRKQSSEKSKDPLPTNFTRNVQKAIDKFASESPSSFSSSGSRTPTEAHNSWPGSSTQSSTTGLSTERSSVSSWRDDEFDKVSAQKVHQLFWEVEELLFEGKVSPQTQNLLAECSEWARRSLHLRVVGRQLVPPTDEGFQHFQGSLPSSATHEALPHVPDHTSSSRELCISGSQIVPEVHSASALTDPDGTESADLTSCSSLKEEVYHVDGNIEEYFAFDRKQDGDEHLGQSPALRGRKRHRHGLPPISPDDCIRDAVAAEVFDHVWTNVVEILEDLIRKTWESALTGGKKHKEKLKVAENRSPHVLMSRLSTDVCSVPPSRSSDTLQPSLAPHFNPPQFPQLHRFSSNFYSDLSGVMTIQAKPLQQRPTYSADRTQNDQDDKLPGGGVGASSRHRLGRILDARGPQTSVKKTPVHRRLPSIASDPQRLKTPTVYSDEILRGTKLQTGIDYLPSPAAVQTSRSRLPPIGSETGEPNTAASGSRPVSYRGRHPQSRVFSAMPDSIERSPLRERTIVLEQLSRPSTTHTFRSDTPRKGSLTPVEFVAHTWTGQSILTGSQYLPKSYQRATLTARKRFQVAS.

7 disordered regions span residues 22–105 (SPAV…SSGA), 144–175 (GSNS…APGP), 189–226 (EEWT…PTNF), 238–284 (ASES…SWRD), 432–455 (DGDE…GLPP), 573–602 (LQQR…ASSR), and 665–697 (AVQT…SYRG). Residues 37-46 (SVDSGASTSL) are compositionally biased toward polar residues. 2 stretches are compositionally biased toward low complexity: residues 51–65 (TLTL…TAAS) and 96–105 (SGSLPSSSGA). The segment covering 144–155 (GSNSVTASSPRN) has biased composition (polar residues). Positions 189-200 (EEWTSDSDSQDD) are enriched in acidic residues. Residues 201-220 (PEGRGLSEGLRKQSSEKSKD) show a composition bias toward basic and acidic residues. Positions 239-250 (SESPSSFSSSGS) are enriched in low complexity. Over residues 251-261 (RTPTEAHNSWP) the composition is skewed to polar residues. The segment covering 262 to 274 (GSSTQSSTTGLST) has biased composition (low complexity).

Belongs to the FAM149 family.

The chain is Protein FAM149A (Fam149a) from Mus musculus (Mouse).